We begin with the raw amino-acid sequence, 190 residues long: Recombination protein RecR (190 aa).

A C4-type zinc finger spans residues Cys58–Cys73. The region spanning Asn81 to Pro167 is the Toprim domain.

It belongs to the RecR family.

Functionally, may play a role in DNA repair. It seems to be involved in an RecBC-independent recombinational process of DNA repair. It may act with RecF and RecO. The sequence is that of Recombination protein RecR from Campylobacter jejuni subsp. jejuni serotype O:23/36 (strain 81-176).